The chain runs to 366 residues: Inositol 2-dehydrogenase (366 aa).

The protein belongs to the Gfo/Idh/MocA family. Homotetramer.

It catalyses the reaction myo-inositol + NAD(+) = scyllo-inosose + NADH + H(+). In terms of biological role, involved in the oxidation of myo-inositol (MI) to 2-keto-myo-inositol (2KMI or 2-inosose). The sequence is that of Inositol 2-dehydrogenase from Rhodococcus jostii (strain RHA1).